We begin with the raw amino-acid sequence, 221 residues long: Late embryogenesis abundant protein, group 3 (221 aa).

A disordered region spans residues 1-221 (MASHQDKASY…KDSSTITRDH (221 aa)). The segment covering 33–42 (TAQHAKDRAA) has biased composition (basic and acidic residues). Over residues 43-52 (DAAGHAAGKG) the composition is skewed to low complexity. Basic and acidic residues-rich tracts occupy residues 53 to 63 (QDAKEATKQKA) and 72 to 147 (KKTD…KQKA). The span at 212–221 (KDSSTITRDH) shows a compositional bias: polar residues.

It belongs to the LEA type 4 family.

The sequence is that of Late embryogenesis abundant protein, group 3 (MGL3) from Zea mays (Maize).